Reading from the N-terminus, the 43-residue chain is Protein PsbN (43 aa).

A helical transmembrane segment spans residues 5–25 (LILSIFIFSLLLGITSYSIYI).

Belongs to the PsbN family.

It localises to the plastid. The protein localises to the chloroplast thylakoid membrane. Functionally, may play a role in photosystem I and II biogenesis. The protein is Protein PsbN of Cyanidium caldarium (Red alga).